We begin with the raw amino-acid sequence, 273 residues long: HTH-type transcriptional regulator NimR (273 aa).

The HTH araC/xylS-type domain occupies 158–258 (PKIRTMVEMM…GQTPGRYIAR (101 aa)). DNA-binding regions (H-T-H motif) lie at residues 178–199 (GQWA…VKET) and 225–248 (VQKV…KKGL).

In terms of biological role, negatively regulates expression of the nimT operon and its own expression. Acts by binding to the nimR-nimT intergenic region. The protein is HTH-type transcriptional regulator NimR of Escherichia coli (strain K12).